Reading from the N-terminus, the 899-residue chain is Protein translocase subunit SecA (899 aa).

ATP-binding positions include glutamine 87, 105–109 (GEGKT), and aspartate 516. 4 residues coordinate Zn(2+): cysteine 884, cysteine 886, cysteine 895, and histidine 896.

It belongs to the SecA family. As to quaternary structure, monomer and homodimer. Part of the essential Sec protein translocation apparatus which comprises SecA, SecYEG and auxiliary proteins SecDF. Other proteins may also be involved. Zn(2+) serves as cofactor.

It is found in the cell inner membrane. It localises to the cytoplasm. It carries out the reaction ATP + H2O + cellular proteinSide 1 = ADP + phosphate + cellular proteinSide 2.. In terms of biological role, part of the Sec protein translocase complex. Interacts with the SecYEG preprotein conducting channel. Has a central role in coupling the hydrolysis of ATP to the transfer of proteins into and across the cell membrane, serving as an ATP-driven molecular motor driving the stepwise translocation of polypeptide chains across the membrane. The protein is Protein translocase subunit SecA of Borreliella afzelii (strain PKo) (Borrelia afzelii).